A 366-amino-acid chain; its full sequence is Mitogen-activated protein kinase sakA (366 aa).

Positions 20-299 (YTDLQPVGMG…AGEALAHEYL (280 aa)) constitute a Protein kinase domain. Residues 26-34 (VGMGAFGLV) and Lys-49 each bind ATP. The active-site Proton acceptor is Asp-141. The residue at position 171 (Thr-171) is a Phosphothreonine. Residues 171–173 (TGY) carry the TXY motif. Phosphotyrosine is present on Tyr-173.

Belongs to the protein kinase superfamily. Ser/Thr protein kinase family. MAP kinase subfamily. HOG1 sub-subfamily. As to quaternary structure, interacts with the AGC kinase ypkA. Interacts with sakA upon osmotic and cell wall stresses. Requires Mg(2+) as cofactor. Dually phosphorylated on Thr-171 and Tyr-173, which activates the enzyme. Environmental stresses such as high temperature, osmotic stress, cold stress or ethanol stress modulate the activation of sakA via phosphorylation.

It is found in the cytoplasm. It localises to the nucleus. The enzyme catalyses L-seryl-[protein] + ATP = O-phospho-L-seryl-[protein] + ADP + H(+). It catalyses the reaction L-threonyl-[protein] + ATP = O-phospho-L-threonyl-[protein] + ADP + H(+). With respect to regulation, activated by tyrosine and threonine phosphorylation. Deactivated by protein phosphatase 2C homolog 2 ptcB. Functionally, proline-directed serine/threonine-protein kinase involved in a signal transduction pathway that is activated by changes in the osmolarity of the extracellular environment. Controls osmotic regulation of transcription of target genes. Involved in environmental stress response. With mpkC, plays a redundant or cooperative role in the conidial stress resistance. Also plays a supportive role in osmotic stress adaptation when sakA is deficient. Involved in paradoxical growth, the cell wall integrity (CWI) pathway and biofilm formation. Also collaborates with mpkC to allow ful virulence in a neutropenic murine model ofinvasive pulmonary aspergillosis. MpkC and sakA have both independent and collaborative functions during the transcriptional response to transient osmotic stress and sakA not only seems to modulate pathways involved in nucleotide, fatty acid, nitrogen and organic acid biosynthesis but is also important for the activation of genes involved in mitochondrial and endoplasmic reticulum functions. This is Mitogen-activated protein kinase sakA from Aspergillus fumigatus (strain ATCC MYA-4609 / CBS 101355 / FGSC A1100 / Af293) (Neosartorya fumigata).